The sequence spans 366 residues: MKKTLLATAIAGAMAASGAQAATVYNQDGTKLDIYGNVQIGFRNIEAENDNGNIETQNDVFDNGSTIGFAAEHVIYDGLTGYMKIEFDDFKADEMKTAGRDAGDTAYVGLKGNFGDVKLGSYDTLMDDWIQDPITNNEYFDVSDTSGSGSSVVAVGGEVETDQLTYVSPSFNGLELAIGTQYKGDMEEENVTSRGNASVFGGAKYTAGNFSVAATYDNLDNYEVTQTGVDNKQEFGDRYGVTGQYQWNSLRVALKYERFDSDLDNVDSVNFYGLGARYGYGYGDIYGAYQYVDVGGDTFGNVVDDATSGDSPSDTASDRGDDTYNEFIIGGTYNISDAMYTWVEAAFYDREDDEGDGVAAGVTYMF.

The first 21 residues, 1–21 (MKKTLLATAIAGAMAASGAQA), serve as a signal peptide directing secretion.

The protein belongs to the Gram-negative porin family. In terms of assembly, homotrimer.

It localises to the cell outer membrane. The chain is Major outer membrane protein from Halomonas elongata (strain ATCC 33173 / DSM 2581 / NBRC 15536 / NCIMB 2198 / 1H9).